Here is a 393-residue protein sequence, read N- to C-terminus: NAD(P)H-quinone oxidoreductase subunit H, chloroplastic (393 aa).

The protein belongs to the complex I 49 kDa subunit family. In terms of assembly, NDH is composed of at least 16 different subunits, 5 of which are encoded in the nucleus.

The protein resides in the plastid. It is found in the chloroplast thylakoid membrane. The catalysed reaction is a plastoquinone + NADH + (n+1) H(+)(in) = a plastoquinol + NAD(+) + n H(+)(out). The enzyme catalyses a plastoquinone + NADPH + (n+1) H(+)(in) = a plastoquinol + NADP(+) + n H(+)(out). NDH shuttles electrons from NAD(P)H:plastoquinone, via FMN and iron-sulfur (Fe-S) centers, to quinones in the photosynthetic chain and possibly in a chloroplast respiratory chain. The immediate electron acceptor for the enzyme in this species is believed to be plastoquinone. Couples the redox reaction to proton translocation, and thus conserves the redox energy in a proton gradient. This chain is NAD(P)H-quinone oxidoreductase subunit H, chloroplastic, found in Amborella trichopoda.